The following is a 334-amino-acid chain: N-acetyl-gamma-glutamyl-phosphate reductase (334 aa).

Residue Cys-154 is part of the active site.

Belongs to the NAGSA dehydrogenase family. Type 1 subfamily.

Its subcellular location is the cytoplasm. The catalysed reaction is N-acetyl-L-glutamate 5-semialdehyde + phosphate + NADP(+) = N-acetyl-L-glutamyl 5-phosphate + NADPH + H(+). It functions in the pathway amino-acid biosynthesis; L-arginine biosynthesis; N(2)-acetyl-L-ornithine from L-glutamate: step 3/4. Catalyzes the NADPH-dependent reduction of N-acetyl-5-glutamyl phosphate to yield N-acetyl-L-glutamate 5-semialdehyde. This Escherichia coli O6:H1 (strain CFT073 / ATCC 700928 / UPEC) protein is N-acetyl-gamma-glutamyl-phosphate reductase.